We begin with the raw amino-acid sequence, 102 residues long: Pyrimidine/purine nucleoside phosphorylase (102 aa).

Belongs to the nucleoside phosphorylase PpnP family.

The catalysed reaction is a purine D-ribonucleoside + phosphate = a purine nucleobase + alpha-D-ribose 1-phosphate. It carries out the reaction adenosine + phosphate = alpha-D-ribose 1-phosphate + adenine. The enzyme catalyses cytidine + phosphate = cytosine + alpha-D-ribose 1-phosphate. It catalyses the reaction guanosine + phosphate = alpha-D-ribose 1-phosphate + guanine. The catalysed reaction is inosine + phosphate = alpha-D-ribose 1-phosphate + hypoxanthine. It carries out the reaction thymidine + phosphate = 2-deoxy-alpha-D-ribose 1-phosphate + thymine. The enzyme catalyses uridine + phosphate = alpha-D-ribose 1-phosphate + uracil. It catalyses the reaction xanthosine + phosphate = alpha-D-ribose 1-phosphate + xanthine. In terms of biological role, catalyzes the phosphorolysis of diverse nucleosides, yielding D-ribose 1-phosphate and the respective free bases. Can use uridine, adenosine, guanosine, cytidine, thymidine, inosine and xanthosine as substrates. Also catalyzes the reverse reactions. The sequence is that of Pyrimidine/purine nucleoside phosphorylase from Shewanella amazonensis (strain ATCC BAA-1098 / SB2B).